Here is a 525-residue protein sequence, read N- to C-terminus: GMP synthase [glutamine-hydrolyzing] (525 aa).

The 199-residue stretch at 9–207 (RILILDFGSQ…VLDICGCEAL (199 aa)) folds into the Glutamine amidotransferase type-1 domain. The active-site Nucleophile is the Cys86. Active-site residues include His181 and Glu183. The region spanning 208-400 (WTPSKIAEDA…LGLPYDMVYR (193 aa)) is the GMPS ATP-PPase domain. Residue 235–241 (SGGVDSS) coordinates ATP.

In terms of assembly, homodimer.

It carries out the reaction XMP + L-glutamine + ATP + H2O = GMP + L-glutamate + AMP + diphosphate + 2 H(+). It functions in the pathway purine metabolism; GMP biosynthesis; GMP from XMP (L-Gln route): step 1/1. Catalyzes the synthesis of GMP from XMP. The protein is GMP synthase [glutamine-hydrolyzing] of Pseudomonas fluorescens (strain Pf0-1).